We begin with the raw amino-acid sequence, 166 residues long: Regulatory protein RecX (166 aa).

This sequence belongs to the RecX family.

It localises to the cytoplasm. Functionally, modulates RecA activity. This is Regulatory protein RecX from Escherichia coli (strain K12 / MC4100 / BW2952).